The sequence spans 737 residues: tRNA (guanine(27)-N(2))-dimethyltransferase (737 aa).

The segment covering 1 to 10 (MENMAEEELL) has biased composition (acidic residues). The segment at 1 to 65 (MENMAEEELL…ASAPVPAPAL (65 aa)) is disordered. The span at 17–49 (VVQVPVPTPTPDSARVPAPAPDSAPVSASTPAP) shows a compositional bias: low complexity. Thr24 is subject to Phosphothreonine. The span at 50–62 (ASAPTPASAPVPA) shows a compositional bias: pro residues. At Ser72 the chain carries Phosphoserine. The Nucleolar localization signal motif lies at 141 to 145 (HKLHR). The C2H2-type zinc finger occupies 190–212 (YHCIICSATITRRTDMLGHVRRH). Positions 233 to 692 (EILKEADTDV…APLMQFKSIL (460 aa)) constitute a Trm1 methyltransferase domain. Positions 266, 313, 363, and 364 each coordinate S-adenosyl-L-methionine. Zn(2+) contacts are provided by Cys494, Cys497, Cys519, and Cys521. Lys589 participates in a covalent cross-link: Glycyl lysine isopeptide (Lys-Gly) (interchain with G-Cter in SUMO2). Phosphoserine is present on Ser616.

This sequence belongs to the class I-like SAM-binding methyltransferase superfamily. Trm1 family.

It is found in the nucleus. Its subcellular location is the nucleolus. It carries out the reaction guanosine(27) in tRNA(Tyr) + 2 S-adenosyl-L-methionine = N(2)-dimethylguanosine(27) in tRNA(Tyr) + 2 S-adenosyl-L-homocysteine + 2 H(+). In terms of biological role, specifically dimethylates a single guanine residue at position 27 of tRNA(Tyr) using S-adenosyl-L-methionine as donor of the methyl groups. Dimethylation at position 27 of tRNA(Tyr) is required for efficient translation of tyrosine codons. Also required to maintain 3-(3-amino-3-carboxypropyl)uridine (acp3U) in the D-loop of several cytoplasmic tRNAs. This Bos taurus (Bovine) protein is tRNA (guanine(27)-N(2))-dimethyltransferase (TRMT1L).